The sequence spans 330 residues: MSTKNFRVSDGDWICPDKKCGNVNFARRTSCNRCGREKTTEAKMMKAGGTEIGKTLAEKSRGLFSANDWQCKTCSNVNWARRSECNMCNTPKYAKLEERTGYGGGFNERENVEYIEREESDGEYDEFGRKKKKYRGKAVGPASILKEVEDKESEGEEEDEDEDLSKYKLDEDEDEDDADLSKYNLDASEEEDSNKKKSNRRSRSKSRSSHSRSSSRSSSPSSSRSRSRSRSRSSSSSQSRSRSSSRERSRSRGSKSRSSSRSHRGSSSPRKRSYSSSSSSPERNRKRSRSRSSSSGDRKKRRTRSRSPERRHRSSSGSSHSGSRSSSKKK.

Serine 9 is subject to Phosphoserine. The segment at 9–40 (SDGDWICPDKKCGNVNFARRTSCNRCGREKTT) adopts a RanBP2-type 1 zinc-finger fold. Lysine 18, lysine 54, and lysine 92 each carry N6-acetyllysine. Residues 65-94 (SANDWQCKTCSNVNWARRSECNMCNTPKYA) form a RanBP2-type 2 zinc finger. Residues 117-330 (REESDGEYDE…SGSRSSSKKK (214 aa)) are disordered. Residues serine 120, serine 153, serine 181, serine 188, and serine 193 each carry the phosphoserine modification. The span at 150 to 163 (DKESEGEEEDEDED) shows a compositional bias: acidic residues. The tract at residues 151 to 324 (KESEGEEEDE…SSGSSHSGSR (174 aa)) is required for nuclear targeting. Residues 196 to 210 (KKSNRRSRSKSRSSH) show a composition bias toward basic residues. Composition is skewed to low complexity over residues 211-224 (SRSS…SSSR) and 232-242 (RSSSSSQSRSR). Basic residues-rich tracts occupy residues 251–273 (SRGS…RKRS) and 298–314 (RKKR…RHRS). Residue threonine 303 is modified to Phosphothreonine. Phosphoserine occurs at positions 305, 307, and 310. Positions 315-330 (SSGSSHSGSRSSSKKK) are enriched in low complexity.

Belongs to the ZRANB2 family. As to quaternary structure, interacts with the C-terminal half of SNRNP70, the Arg/Ser-rich domain of AKAP17A as well as with U2AF1 and CLK1. Isoform 2 is phosphorylated on Ser-310 upon DNA damage, probably by ATM or ATR.

It is found in the nucleus. Splice factor required for alternative splicing of TRA2B/SFRS10 transcripts. Binds to ssRNA containing the consensus sequence 5'-AGGUAA-3'. May interfere with constitutive 5'-splice site selection. The sequence is that of Zinc finger Ran-binding domain-containing protein 2 (ZRANB2) from Homo sapiens (Human).